A 1153-amino-acid polypeptide reads, in one-letter code: Reverse gyrase 2 (1153 aa).

The RG N-terminal-type zinc finger occupies 1-41; that stretch reads MLKVNYLFGCPNCNGSISVDRLHAGIPCETCLPGAVEKLDI. Zn(2+)-binding residues include cysteine 10, cysteine 13, cysteine 28, and cysteine 31. ATP contacts are provided by residues glutamine 86 and 103-110; that span reads APTGVGKT. In terms of domain architecture, Helicase ATP-binding spans 90 to 276; it reads LNKLVRGESF…ALRFLVGFEP (187 aa). The short motif at 184-187 is the DEAD box element; the sequence is DDAD. Residues 567–1153 form a topoisomerase I region; the sequence is MNFKTALLVV…VNPLQSEQYV (587 aa). The region spanning 571–735 is the Toprim domain; that stretch reads TALLVVESPT…NIFRISYNEI (165 aa). Glutamate 577 is a Mg(2+) binding site. An RG C-terminal-type zinc finger spans residues 654-681; sequence LYRCMSCGKTITKKVSTCPYCGSSMINS. 4 residues coordinate Zn(2+): cysteine 657, cysteine 660, cysteine 671, and cysteine 674. Aspartate 704 contacts Mg(2+). In terms of domain architecture, Topo IA-type catalytic spans 751-1142; the sequence is NESLVKAQIA…DLLNEIKNIK (392 aa). The O-(5'-phospho-DNA)-tyrosine intermediate role is filled by tyrosine 894.

The protein in the N-terminal section; belongs to the DEAD box helicase family. DDVD subfamily. This sequence in the C-terminal section; belongs to the type IA topoisomerase family. In terms of assembly, monomer. It depends on Zn(2+) as a cofactor. Requires Mg(2+) as cofactor.

The protein resides in the cytoplasm. It catalyses the reaction ATP + H2O = ADP + phosphate + H(+). In terms of biological role, modifies the topological state of DNA by introducing positive supercoils in an ATP-dependent process, increasing the linking number in steps of +1. Binds to single-stranded DNA, transiently cleaves and then rejoins the ends, introducing a positive supercoil in the process. The scissile phosphodiester is attacked by the catalytic tyrosine of the enzyme, resulting in the formation of a DNA-(5'-phosphotyrosyl)-enzyme intermediate. Probably involved in rewinding DNA strands in regions of the chromosome that have opened up to allow replication, transcription, DNA repair and/or for DNA protection. Might be a cell cycle protein. In Sulfolobus acidocaldarius (strain ATCC 33909 / DSM 639 / JCM 8929 / NBRC 15157 / NCIMB 11770), this protein is Reverse gyrase 2.